The primary structure comprises 202 residues: Small ribosomal subunit protein uS4 (202 aa).

The interval 18–42 (LPGLTRKAAKRSYPPGQHGQARRKR) is disordered. The region spanning 90–152 (NRLDNVCFRL…KPSKKLAETN (63 aa)) is the S4 RNA-binding domain.

Belongs to the universal ribosomal protein uS4 family. Part of the 30S ribosomal subunit. Contacts protein S5. The interaction surface between S4 and S5 is involved in control of translational fidelity.

One of the primary rRNA binding proteins, it binds directly to 16S rRNA where it nucleates assembly of the body of the 30S subunit. Functionally, with S5 and S12 plays an important role in translational accuracy. This Synechococcus sp. (strain RCC307) protein is Small ribosomal subunit protein uS4.